The following is a 158-amino-acid chain: Large ribosomal subunit protein uL18 (158 aa).

Belongs to the universal ribosomal protein uL18 family. As to quaternary structure, part of the 50S ribosomal subunit. Contacts the 5S and 23S rRNAs.

In terms of biological role, this is one of the proteins that bind and probably mediate the attachment of the 5S RNA into the large ribosomal subunit, where it forms part of the central protuberance. The sequence is that of Large ribosomal subunit protein uL18 from Picrophilus torridus (strain ATCC 700027 / DSM 9790 / JCM 10055 / NBRC 100828 / KAW 2/3).